The primary structure comprises 248 residues: Adenosylcobinamide-GDP ribazoletransferase (248 aa).

A run of 7 helical transmembrane segments spans residues 24–44 (EINL…IGAW), 70–90 (VIIT…GLFS), 106–126 (VGAN…ALFL), 134–154 (ICWL…LLFA), 168–188 (IFLG…LAVL), 189–209 (GLFF…FTII), and 228–248 (AGGQ…WGLV).

Belongs to the CobS family. The cofactor is Mg(2+).

It is found in the cell membrane. The enzyme catalyses alpha-ribazole + adenosylcob(III)inamide-GDP = adenosylcob(III)alamin + GMP + H(+). It carries out the reaction alpha-ribazole 5'-phosphate + adenosylcob(III)inamide-GDP = adenosylcob(III)alamin 5'-phosphate + GMP + H(+). It participates in cofactor biosynthesis; adenosylcobalamin biosynthesis; adenosylcobalamin from cob(II)yrinate a,c-diamide: step 7/7. Joins adenosylcobinamide-GDP and alpha-ribazole to generate adenosylcobalamin (Ado-cobalamin). Also synthesizes adenosylcobalamin 5'-phosphate from adenosylcobinamide-GDP and alpha-ribazole 5'-phosphate. This Listeria monocytogenes serovar 1/2a (strain ATCC BAA-679 / EGD-e) protein is Adenosylcobinamide-GDP ribazoletransferase.